The sequence spans 943 residues: MSQDYKTTLNLPATEFPMRGDLPKREPGILARWEAQGLYQQLRDNAAGRPLFVLHDGPPYANGRIHLGHAVNKILKDIIVKSRYLAGFDAPYVPGWDCHGLPIEIAVEKKWGKVGTKLDAVEFRQKCREFAEEQINIQRVDFKRLGVTGDWDNPYKTLSFDFEANEIRALSKVVANGHLVRGAKPVYWCFDCGSALAEAEIEYQEKESPAIDVAYAARDAQAIGQAFGVSVPADVEVAVPIWTTTPWTLPASLAVSLGAEITYVLAEGPAHNGKRRWLVLAAALAERALQRYGVENLVLHGETTGAALENQLLAHPFYPEREILVLNGDHVSDEDGTGAVHTAPGHGQEDFVVSQKYGLLDKYNAGQVTPIDGRGVYLESTPPAGDVVLAGQHLWKAQEAIVGVLRDNGSLLAFHPIRHSYPHCWRHKTPVVFRATPQWFISMDKANLRNDALAAIDTVGWFPTWGKARIQSMVDGRPDWTISRQRTWGVPIALFTHRQTGEIHPRSVELMQQVADRVEAEGIDVWYSLDATELLGAEAADYEKVTDILDVWFDSGVTHEGVLAARGFGKPADLYLEGSDQHRGWFQSSLLTGVAIDKRAPYKQCLTHGFTVDEHGRKMSKSLGNGIEPQDIMNKLGADILRLWIASADYSNEMSLSQEILKRNADAYRRLRNTARFLLGNLDGFDPAQHLRPLDQMVALDRWIVHRAWELQEKIKAAYDGYNMAEIVQLLLNFCSVDLGSLYLDVTKDRLYTMPTDSHGRRSAQSAMYHIAEAFTRWVAPILTFTADELWGYLPGEHAGHVLFTTWYDGLAPLPADAQLNATDFDQLLAVREQVAKVLEPMRANGAIGAALEAEITIAANEEQAAKWQPLADELRFLFISGDVQVRPATTDEVFVSAQPTTKAKCVRCWHHRADVGRNADHPELCGRCVSNVTGAGEVRSWF.

The 'HIGH' region signature appears at 59 to 69 (PYANGRIHLGH). Residue E577 participates in L-isoleucyl-5'-AMP binding. A 'KMSKS' region motif is present at residues 618–622 (KMSKS). K621 is an ATP binding site. Zn(2+)-binding residues include C906, C909, C926, and C929.

This sequence belongs to the class-I aminoacyl-tRNA synthetase family. IleS type 1 subfamily. Monomer. The cofactor is Zn(2+).

The protein resides in the cytoplasm. The enzyme catalyses tRNA(Ile) + L-isoleucine + ATP = L-isoleucyl-tRNA(Ile) + AMP + diphosphate. Catalyzes the attachment of isoleucine to tRNA(Ile). As IleRS can inadvertently accommodate and process structurally similar amino acids such as valine, to avoid such errors it has two additional distinct tRNA(Ile)-dependent editing activities. One activity is designated as 'pretransfer' editing and involves the hydrolysis of activated Val-AMP. The other activity is designated 'posttransfer' editing and involves deacylation of mischarged Val-tRNA(Ile). The chain is Isoleucine--tRNA ligase from Stenotrophomonas maltophilia (strain K279a).